We begin with the raw amino-acid sequence, 429 residues long: METFLFTSESVNEGHPDKLCDQISDAVLDACLAQDPDSKVACETCTKTNMVMVFGEITTKADVDYEKIVRDTCRSIGFVSDDVGLDADKCKVLVNIEQQSPDIAQGVHGHFTKRPEEIGAGDQGHMFGYATDETPEFMPLSHVLATKLGARLTEVRKNGTCPWLRPDGKTQVTVEYYNENGARVPVRVHTVLISTQHDETVTNDEIAADLKEHVIKPVIPEKYLDEKTIFHLNPSGRFVIGGPHGDAGLTGRKIIIDTYGGWGAHGGGAFSGKDPTKVDRSGAYIVRQAAKSIVANGLARRCIVQVSYAIGVPEPLSVYVDTYGTGKIPDKEILKIVKENFDFRPGMITINLDLKRGGNSRFLKTAAYGHFGRDDPDFTWEVVKPSSGRSLNLKVLVVIIPACFIELIIGCLMLMLNSPYSIEVSYMMI.

Mg(2+) is bound at residue Glu9. His15 is a binding site for ATP. A K(+)-binding site is contributed by Glu43. L-methionine-binding residues include Glu56 and Gln99. ATP-binding positions include 167 to 169 (DGK), 235 to 238 (SGRF), Asp246, 252 to 253 (RK), Ala269, Lys273, and Lys277. Asp246 serves as a coordination point for L-methionine. Residue Lys277 participates in L-methionine binding.

It belongs to the AdoMet synthase family. As to quaternary structure, homotetramer. The cofactor is Mn(2+). Requires Mg(2+) as cofactor. Co(2+) is required as a cofactor. It depends on K(+) as a cofactor.

It is found in the cytoplasm. It carries out the reaction L-methionine + ATP + H2O = S-adenosyl-L-methionine + phosphate + diphosphate. It participates in amino-acid biosynthesis; S-adenosyl-L-methionine biosynthesis; S-adenosyl-L-methionine from L-methionine: step 1/1. Catalyzes the formation of S-adenosylmethionine from methionine and ATP. The reaction comprises two steps that are both catalyzed by the same enzyme: formation of S-adenosylmethionine (AdoMet) and triphosphate, and subsequent hydrolysis of the triphosphate. This chain is S-adenosylmethionine synthase (SAMS), found in Carica papaya (Papaya).